A 1055-amino-acid chain; its full sequence is DIS3-like exonuclease 2 (1055 aa).

Disordered regions lie at residues 1-109 and 229-249; these read MKSA…SSPE and SAAK…KARQ. Residues 17 to 32 are compositionally biased toward basic residues; sequence HKKKRNRPQKQNRRSK. The span at 39–59 shows a compositional bias: basic and acidic residues; sequence EDAHVEESLDGRDSSRSKAKD. Residues 97-108 are compositionally biased toward low complexity; it reads PRRSASPLLSSP. Mg(2+)-binding residues include Asp-488 and Asp-497.

Belongs to the RNR ribonuclease family. DIS3L2 subfamily. The cofactor is Mg(2+). Mn(2+) serves as cofactor. Widely expressed.

It localises to the cytoplasm. It is found in the P-body. 3'-5'-exoribonuclease that specifically recognizes RNAs polyuridylated at their 3' end and mediates their degradation. Component of an exosome-independent RNA degradation pathway that mediates degradation of cytoplasmic mRNAs that have been deadenylated and subsequently uridylated at their 3'. This Arabidopsis thaliana (Mouse-ear cress) protein is DIS3-like exonuclease 2 (SOV).